The following is a 188-amino-acid chain: Ribosome-recycling factor (188 aa).

It belongs to the RRF family.

It is found in the cytoplasm. Functionally, responsible for the release of ribosomes from messenger RNA at the termination of protein biosynthesis. May increase the efficiency of translation by recycling ribosomes from one round of translation to another. The polypeptide is Ribosome-recycling factor (Lawsonia intracellularis (strain PHE/MN1-00)).